The primary structure comprises 1819 residues: Protein REDUCED CHLOROPLAST COVERAGE 2 (1819 aa).

Residues 1 to 17 (MAPKAGKTKPHKSKGEK) are compositionally biased toward basic residues. 4 disordered regions span residues 1–23 (MAPKAGKTKPHKSKGEKKKKEEK), 128–180 (KPPV…GACE), 595–619 (QASSKSESKKTEDPKPEPAVKGLGK), and 634–664 (KANKTEQGKEAPANDTDNTSETEDQKELEKQ). Composition is skewed to basic and acidic residues over residues 135–145 (LPKDSEKKESG) and 600–612 (SESKKTEDPKPEP). The region spanning 329-603 (EDETWGGDGG…NQASSKSESK (275 aa)) is the Clu domain. Residues 649–680 (TDNTSETEDQKELEKQNEEIEKMWKELVTETA) are a coiled coil. TPR repeat units lie at residues 892–925 (GRTLLESSKTSLDKGKLEDAVNYGTKALAKLVAV), 934–967 (AGAYSLLAVVLYHTGDFNQATIYQQKALDINERE), 976–1009 (MKSYGDLAVFYYRLQHTELALKYVNRALYLLHLT), 1018–1051 (AATYINVAMMEEGMKNAHVALRYLHEALKCNQRL), and 1060–1093 (AASYHAIAIALSLMDAYSLSVQHEQTTLQILQAK). Disordered stretches follow at residues 1152–1360 (SGIK…PMLS), 1413–1456 (KVNA…SPKE), 1468–1513 (KAFP…SESV), 1527–1573 (LKTV…ASAP), 1616–1670 (STPH…PRIM), and 1731–1809 (LVSE…DYSD). Basic and acidic residues-rich tracts occupy residues 1199–1224 (SSDKENKSETKSEEKKVENFDLEQSK) and 1230–1239 (KLVKPEATVH). Ser1244 carries the phosphoserine modification. Over residues 1269–1313 (KLNTNFMNVTQQPSRSRGKSTNFTSPRTSSNELSISVAGSTSSPA) the composition is skewed to polar residues. The residue at position 1320 (Ser1320) is a Phosphoserine. A compositionally biased stretch (polar residues) spans 1343–1354 (LASSACTEQINK). Composition is skewed to polar residues over residues 1496 to 1511 (CLLNKSPTANDSNGSE) and 1536 to 1546 (NLPNGDSSPKS). Residues 1551 to 1566 (DGEKQDACEAQKEMSK) show a composition bias toward basic and acidic residues. Residues 1650-1665 (SFPNSTESNGEANQFN) show a composition bias toward polar residues. Residues 1742–1759 (SEEKSGSEEESNNDKNAG) show a composition bias toward basic and acidic residues. The span at 1767 to 1778 (QETTDTPENGHS) shows a compositional bias: polar residues. Basic and acidic residues predominate over residues 1785 to 1800 (TTSHETCDEKNGERQG).

Expressed in the non-epidermal tissues of the true leaves. Not detected in the vegetative shoot meristem and leaf primordia.

The protein resides in the nucleus. It localises to the cytoplasm. Its subcellular location is the cytosol. Negatively regulates meristematic tissue proliferation by integrating developmental signals with carbon source availability. May act as the scaffold of a protein complex, which sequesters key factors that are required for the G2 to M transition in meristematic tissues. Together with REC2, REC3 and FMT/CLU, contributes to the establishment of the cellular volume devoted to the chloroplast compartment. This chain is Protein REDUCED CHLOROPLAST COVERAGE 2, found in Arabidopsis thaliana (Mouse-ear cress).